The sequence spans 291 residues: F-box protein PP2-A12 (291 aa).

An F-box domain is found at 25–71; that stretch reads KPGLGDLPEACVAIIVENLDPVEICRFSKLNRAFRGASWADCVWESK.

In Arabidopsis thaliana (Mouse-ear cress), this protein is F-box protein PP2-A12 (P2A12).